The following is a 244-amino-acid chain: Rho-related GTP-binding protein RhoE (244 aa).

A GTP-binding site is contributed by 30–37 (GDSQCGKT). An Effector region motif is present at residues 52-60 (YVPTVFENY). GTP is bound by residues 77–81 (DTSGS) and 135–138 (CKSD). At Cys241 the chain carries Cysteine methyl ester. Cys241 carries the S-farnesyl cysteine lipid modification. A propeptide spans 242 to 244 (TVM) (removed in mature form).

Belongs to the small GTPase superfamily. Rho family. As to quaternary structure, binds ROCK1. Interacts with UBXD5. In terms of tissue distribution, ubiquitous.

The protein localises to the golgi apparatus membrane. Its function is as follows. Binds GTP but lacks intrinsic GTPase activity and is resistant to Rho-specific GTPase-activating proteins. In Homo sapiens (Human), this protein is Rho-related GTP-binding protein RhoE (RND3).